Here is a 482-residue protein sequence, read N- to C-terminus: tRNA sulfurtransferase (482 aa).

A THUMP domain is found at 61–165 (LAIRDALTRI…DDRLLLIKGR (105 aa)). ATP contacts are provided by residues 183 to 184 (LI), Lys-265, Gly-287, and Gln-296. Cys-344 and Cys-456 are disulfide-bonded. Residues 404 to 482 (FGANDVILDI…GFANVKVYRP (79 aa)) enclose the Rhodanese domain. The active-site Cysteine persulfide intermediate is the Cys-456.

This sequence belongs to the ThiI family.

Its subcellular location is the cytoplasm. It carries out the reaction [ThiI sulfur-carrier protein]-S-sulfanyl-L-cysteine + a uridine in tRNA + 2 reduced [2Fe-2S]-[ferredoxin] + ATP + H(+) = [ThiI sulfur-carrier protein]-L-cysteine + a 4-thiouridine in tRNA + 2 oxidized [2Fe-2S]-[ferredoxin] + AMP + diphosphate. The enzyme catalyses [ThiS sulfur-carrier protein]-C-terminal Gly-Gly-AMP + S-sulfanyl-L-cysteinyl-[cysteine desulfurase] + AH2 = [ThiS sulfur-carrier protein]-C-terminal-Gly-aminoethanethioate + L-cysteinyl-[cysteine desulfurase] + A + AMP + 2 H(+). Its pathway is cofactor biosynthesis; thiamine diphosphate biosynthesis. Its function is as follows. Catalyzes the ATP-dependent transfer of a sulfur to tRNA to produce 4-thiouridine in position 8 of tRNAs, which functions as a near-UV photosensor. Also catalyzes the transfer of sulfur to the sulfur carrier protein ThiS, forming ThiS-thiocarboxylate. This is a step in the synthesis of thiazole, in the thiamine biosynthesis pathway. The sulfur is donated as persulfide by IscS. The sequence is that of tRNA sulfurtransferase from Salmonella paratyphi B (strain ATCC BAA-1250 / SPB7).